We begin with the raw amino-acid sequence, 730 residues long: Kinesin-like protein KIF2C (730 aa).

The globular stretch occupies residues 1–256; sequence MERLVATRLV…MDCHRISMAD (256 aa). Positions 79–98 are disordered; that stretch reads NMPPQRNVSSQNHKRKTISK. Residues 211–242 form a negative regulator of microtubule-binding region; the sequence is EQRAQNYERRMKRAQDYDTSVPNWEFGKMIKE. One can recognise a Kinesin motor domain in the interval 262–592; sequence RICVCVRKRP…LRYADRVKEL (331 aa). Residues arginine 268 and 352–359 contribute to the ATP site; that span reads GQTGSGKT. Residues 599–730 are a coiled coil; it reads TNDDNLQMED…QISKKKRSNK (132 aa).

Belongs to the TRAFAC class myosin-kinesin ATPase superfamily. Kinesin family. MCAK/KIF2 subfamily.

The protein resides in the cytoplasm. Its subcellular location is the cytoskeleton. The protein localises to the nucleus. It is found in the chromosome. It localises to the centromere. The protein resides in the kinetochore. Its function is as follows. Promotes ATP-dependent removal of tubulin dimers from microtubules. Regulates the turnover of microtubules at the kinetochore and functions in chromosome segregation during mitosis. May play a role in chromosome congression and may be required for the lateral to end-on conversion of the chromosome-microtubule attachment. The polypeptide is Kinesin-like protein KIF2C (kif2c) (Xenopus laevis (African clawed frog)).